The primary structure comprises 461 residues: RNA-binding protein ZCH321 (461 aa).

2 C3H1-type zinc fingers span residues 63–85 (LCQL…HAAL) and 181–208 (ACDF…HICK). A disordered region spans residues 224-243 (TSQARDGGEPGPRGAKKGSV). Residues 446-451 (WQHNPY) carry the MKT1-binding motif motif.

In terms of biological role, RNA-binding protein involved in regulation of mRNA stability. Promotes mRNA stabilization by recruiting MKT1 and PBP1. Stabilizes transcripts encoding mitochondrial proteins. The protein is RNA-binding protein ZCH321 of Trypanosoma brucei brucei (strain 927/4 GUTat10.1).